Reading from the N-terminus, the 274-residue chain is Large ribosomal subunit protein uL2 (274 aa).

Disordered regions lie at residues 28-54 (APHA…TRHI) and 224-274 (VAMN…RRRK). Positions 263-274 (KRTDKMIVRRRK) are enriched in basic and acidic residues.

Belongs to the universal ribosomal protein uL2 family. Part of the 50S ribosomal subunit. Forms a bridge to the 30S subunit in the 70S ribosome.

One of the primary rRNA binding proteins. Required for association of the 30S and 50S subunits to form the 70S ribosome, for tRNA binding and peptide bond formation. It has been suggested to have peptidyltransferase activity; this is somewhat controversial. Makes several contacts with the 16S rRNA in the 70S ribosome. In Pseudomonas syringae pv. tomato (strain ATCC BAA-871 / DC3000), this protein is Large ribosomal subunit protein uL2.